A 456-amino-acid polypeptide reads, in one-letter code: tRNA modification GTPase MnmE (456 aa).

The (6S)-5-formyl-5,6,7,8-tetrahydrofolate site is built by Lys29, Glu87, and Arg126. In terms of domain architecture, TrmE-type G spans 222 to 380; that stretch reads GYKLAIIGRP…LLSLLASWLD (159 aa). Asn232 is a binding site for K(+). Residues 232–237, 251–257, and 276–279 contribute to the GTP site; these read NVGKSS, SDIPGTT, and DTAG. Residue Ser236 participates in Mg(2+) binding. K(+) is bound by residues Ser251, Ile253, and Thr256. Thr257 is a Mg(2+) binding site. (6S)-5-formyl-5,6,7,8-tetrahydrofolate is bound at residue Lys456.

This sequence belongs to the TRAFAC class TrmE-Era-EngA-EngB-Septin-like GTPase superfamily. TrmE GTPase family. Homodimer. Heterotetramer of two MnmE and two MnmG subunits. Requires K(+) as cofactor.

The protein resides in the cytoplasm. Functionally, exhibits a very high intrinsic GTPase hydrolysis rate. Involved in the addition of a carboxymethylaminomethyl (cmnm) group at the wobble position (U34) of certain tRNAs, forming tRNA-cmnm(5)s(2)U34. The sequence is that of tRNA modification GTPase MnmE from Wolinella succinogenes (strain ATCC 29543 / DSM 1740 / CCUG 13145 / JCM 31913 / LMG 7466 / NCTC 11488 / FDC 602W) (Vibrio succinogenes).